Consider the following 280-residue polypeptide: SERGCAYCGAKHVIGTPMKDVIHISHGPVGCTYDTWQTKRYISDNDNFQLKYTYATDMKEKHIVFGAEKLLKKNIIEAFQAFPDIKRMTIYQTCASALIGDDINAIAQEVMDELPDVDIFVCNSPGFAGPSQSGGHHKINIAWIDQKVGTVEPKITSDYVINYVGEYNIQGDQEVMLDYFKRMGIQVLSTFTGNGSYDDLRAMHRAHLNVLECARSAEYICNELRVRYGIPRLDIDGFGFEPLSTSLRKIGLFFGIEDRAQAIIEEETARWKPELDWYKE.

[8Fe-7S] cluster contacts are provided by C5, C31, and C94. C213 lines the [8Fe-9S-C-homocitryl] cluster pocket.

The protein belongs to the NifD/NifK/NifE/NifN family. As to quaternary structure, hexamer of two alpha, two beta, and two delta chains. It depends on [8Fe-7S] cluster as a cofactor. [8Fe-9S-C-homocitryl] cluster is required as a cofactor.

The catalysed reaction is N2 + 8 reduced [2Fe-2S]-[ferredoxin] + 16 ATP + 16 H2O = H2 + 8 oxidized [2Fe-2S]-[ferredoxin] + 2 NH4(+) + 16 ADP + 16 phosphate + 6 H(+). Functionally, this iron-iron protein is part of the nitrogenase complex that catalyzes the key enzymatic reactions in nitrogen fixation. Other nitrogenase complexes utilize a molybdenum-iron protein or a vanadium-iron protein. The protein is Nitrogenase iron-iron protein alpha chain (anfD) of Heliomicrobium gestii (Heliobacterium gestii).